We begin with the raw amino-acid sequence, 370 residues long: Cytochrome b (370 aa).

Transmembrane regions (helical) follow at residues 30-50 (FGSMLGMVLVFQIVTGTFLAF), 74-96 (WIFRIFHFNGASLFFIFLYLHIF), 109-129 (VWMSGLTIYLLVMMEAFMGYV), and 175-195 (FFVLHFLLPWAILFIVLGHLI). Residues H80 and H94 each coordinate heme b. Residues H179 and H193 each coordinate heme b. Residue H198 participates in a ubiquinone binding. 4 helical membrane passes run 221–240 (YIGKDAYNIVVWLVFIVLSL), 284–304 (VLGVIALLMSIVTFYFFALVN), 316–336 (FLVFLFIISSVILSWLGQCMV), and 342–362 (VLSPLFSVIYFGLAYLLLGIF).

This sequence belongs to the cytochrome b family. The main subunits of complex b-c1 are: cytochrome b, cytochrome c1 and the Rieske protein. The cofactor is heme b.

It is found in the mitochondrion inner membrane. Functionally, component of the ubiquinol-cytochrome c reductase complex (complex III or cytochrome b-c1 complex) that is part of the mitochondrial respiratory chain. The b-c1 complex mediates electron transfer from ubiquinol to cytochrome c. Contributes to the generation of a proton gradient across the mitochondrial membrane that is then used for ATP synthesis. The chain is Cytochrome b (ctb-1) from Caenorhabditis briggsae.